The primary structure comprises 370 residues: Probable butyrate kinase (370 aa).

This sequence belongs to the acetokinase family.

The protein localises to the cytoplasm. It carries out the reaction butanoate + ATP = butanoyl phosphate + ADP. This Elusimicrobium minutum (strain Pei191) protein is Probable butyrate kinase.